The primary structure comprises 350 residues: CMP-N-acetylneuraminate-beta-galactosamide-alpha-2,3-sialyltransferase 2 (350 aa).

Residues 1–6 (MKCSLR) are Cytoplasmic-facing. Residues 7–27 (VWFLSMAFLLVFIMSLLFTYS) traverse the membrane as a helical; Signal-anchor for type II membrane protein segment. The Lumenal portion of the chain corresponds to 28 to 350 (HHSMATLPYL…ASKIEVYRGN (323 aa)). 3 disulfide bridges follow: Cys70–Cys75, Cys72–Cys149, and Cys152–Cys291. Positions 116, 157, and 180 each coordinate substrate. Residue Asn211 is glycosylated (N-linked (GlcNAc...) asparagine). Positions 240, 276, 280, 300, 309, and 326 each coordinate substrate.

This sequence belongs to the glycosyltransferase 29 family. Homodimer; disulfide-linked. Homodimer formation occurs in the endoplasmic reticulum. In terms of processing, the soluble form derives from the membrane form by proteolytic processing. Post-translationally, N-glycosylated; necessary for proper exit from endoplasmic reticulum and trafficking to the Golgi apparatus.

The protein resides in the golgi apparatus. It is found in the golgi stack membrane. The protein localises to the secreted. It carries out the reaction a beta-D-galactosyl-(1-&gt;3)-N-acetyl-alpha-D-galactosaminyl derivative + CMP-N-acetyl-beta-neuraminate = an N-acetyl-alpha-neuraminyl-(2-&gt;3)-beta-D-galactosyl-(1-&gt;3)-N-acetyl-alpha-D-galactosaminyl derivative + CMP + H(+). It catalyses the reaction a ganglioside GM1 (d18:1(4E)) + CMP-N-acetyl-beta-neuraminate = a ganglioside GD1a (d18:1(4E)) + CMP + H(+). The enzyme catalyses ganglioside GM1 (d18:1(4E)/18:0) + CMP-N-acetyl-beta-neuraminate = ganglioside GD1a (18:1(4E)/18:0) + CMP + H(+). The catalysed reaction is a ganglioside GA1 + CMP-N-acetyl-beta-neuraminate = a ganglioside GM1b + CMP + H(+). It carries out the reaction a ganglioside GA1 (d18:1(4E)) + CMP-N-acetyl-beta-neuraminate = a ganglioside GM1b (d18:1(4E)) + CMP + H(+). It catalyses the reaction a globoside GalGb4Cer + CMP-N-acetyl-beta-neuraminate = a globoside MSGG + CMP + H(+). It participates in protein modification; protein glycosylation. The protein operates within glycolipid biosynthesis. Its function is as follows. A beta-galactoside alpha2-3 sialyltransferase primarily involved in terminal sialylation of ganglio and globo series glycolipids. Catalyzes the transfer of sialic acid (N-acetyl-neuraminic acid; Neu5Ac) from the nucleotide sugar donor CMP-Neu5Ac onto acceptor Galbeta-(1-&gt;3)-GalNAc-terminated glycoconjugates through an alpha2-3 linkage. Sialylates GM1/GM1a, GA1/asialo-GM1 gangliosides to form GD1a and GM1b, respectively. Together with ST3GAL3, primarily responsible for biosynthesis of brain gangliosides that function as ligand for myelin-associated glycoprotein MAG on axons, regulating MAG expression and axonal myelin stability and regeneration. Responsible for the sialylation of the pluripotent stem cell- and cancer stem cell-associated antigen SSEA3, forming SSEA4. Sialylates with low efficiency asialofetuin, presumably onto O-glycosidically linked Galbeta-(1-&gt;3)-GalNAc-O-Ser. The sequence is that of CMP-N-acetylneuraminate-beta-galactosamide-alpha-2,3-sialyltransferase 2 (St3gal2) from Rattus norvegicus (Rat).